The following is a 157-amino-acid chain: MFDVLMYLFETYIHNEAELRVDQDRLERDLTDAGFDREDIYNALLWLEKLADYQDGLAEPMQLASDPLSMRIYTVEECERLDASCRGFLLFLEQIQVLNLETREMVIERVLALDTAEFDLEDLKWVILMVLFNIPGCENAYQQMEELLFEVNEGMLH.

Belongs to the Smg family.

The sequence is that of Protein Smg from Salmonella agona (strain SL483).